A 136-amino-acid chain; its full sequence is Large ribosomal subunit protein uL13 (136 aa).

Belongs to the universal ribosomal protein uL13 family. Part of the 50S ribosomal subunit.

This protein is one of the early assembly proteins of the 50S ribosomal subunit, although it is not seen to bind rRNA by itself. It is important during the early stages of 50S assembly. This chain is Large ribosomal subunit protein uL13, found in Thermoplasma volcanium (strain ATCC 51530 / DSM 4299 / JCM 9571 / NBRC 15438 / GSS1).